The chain runs to 255 residues: Endonuclease V (255 aa).

Residues Asp42 and Asp110 each contribute to the Mg(2+) site.

This sequence belongs to the endonuclease V family. Requires Mg(2+) as cofactor.

Its subcellular location is the cytoplasm. The catalysed reaction is Endonucleolytic cleavage at apurinic or apyrimidinic sites to products with a 5'-phosphate.. In terms of biological role, DNA repair enzyme involved in the repair of deaminated bases. Selectively cleaves double-stranded DNA at the second phosphodiester bond 3' to a deoxyinosine leaving behind the intact lesion on the nicked DNA. In Aeropyrum pernix (strain ATCC 700893 / DSM 11879 / JCM 9820 / NBRC 100138 / K1), this protein is Endonuclease V.